Here is a 919-residue protein sequence, read N- to C-terminus: Transcriptional regulatory protein EDS1 (919 aa).

Residues 1 to 54 (MSHHVPNLYGTPIRDPHEHKRNSASMGEVNQSVSSRNCERGSEKGTKQRKKASR) form a disordered region. A compositionally biased stretch (polar residues) spans 23–36 (SASMGEVNQSVSSR). Basic and acidic residues predominate over residues 37-46 (NCERGSEKGT). Positions 56–85 (CDQCRRKRIKCRFDKHTGVCQGCLEVGEKC) form a DNA-binding region, zn(2)-C6 fungal-type. The segment at 297–338 (AGCPNKKLGTDGRSDKWDKNSTWKPVYRSSNPSHPSTEKNVS) is disordered. Residues 304 to 317 (LGTDGRSDKWDKNS) are compositionally biased toward basic and acidic residues. Residues 318-338 (TWKPVYRSSNPSHPSTEKNVS) show a composition bias toward polar residues.

As to quaternary structure, binds DNA in a sequence-specific manner.

It localises to the nucleus. This is Transcriptional regulatory protein EDS1 (EDS1) from Saccharomyces cerevisiae (strain Lalvin EC1118 / Prise de mousse) (Baker's yeast).